A 640-amino-acid chain; its full sequence is Pleckstrin homology-like domain family B member 3 (640 aa).

5 disordered regions span residues 1-100, 162-189, 241-262, 387-412, and 476-504; these read MGTR…AARR, LEQQAASEQRGRQQREQEQRRLSQERDR, LERESRQEEEDRDSPGPQVPDP, GLQRTGSLPRKRGERGSQRGSPRPLS, and REGTRRGTEGSSGPAVPAITAPPTPPHPP. Positions 76 to 90 are enriched in low complexity; the sequence is PPIAMAATPPASTSS. Residues 104–327 adopt a coiled-coil conformation; the sequence is QQLEALTRVA…ERSRLLELNC (224 aa). Residues 170-189 are compositionally biased toward basic and acidic residues; it reads QRGRQQREQEQRRLSQERDR. Residues 454-481 adopt a coiled-coil conformation; sequence DIAHMERLLQQAMAERERLLKAREGTRR. The span at 495-504 shows a compositional bias: pro residues; it reads TAPPTPPHPP. In terms of domain architecture, PH spans 532–635; it reads GCCCRGPLVK…WMDVIVTAAD (104 aa).

The chain is Pleckstrin homology-like domain family B member 3 (PHLDB3) from Homo sapiens (Human).